The chain runs to 65 residues: Large ribosomal subunit protein bL35 (65 aa).

It belongs to the bacterial ribosomal protein bL35 family.

The polypeptide is Large ribosomal subunit protein bL35 (Sorangium cellulosum (strain So ce56) (Polyangium cellulosum (strain So ce56))).